The chain runs to 278 residues: Pantothenate synthetase (278 aa).

ATP is bound at residue 26 to 33 (MGNLHEGH). His-33 acts as the Proton donor in catalysis. Position 57 (Gln-57) interacts with (R)-pantoate. Residue Gln-57 coordinates beta-alanine. 144 to 147 (GKKD) contacts ATP. Residue Gln-150 participates in (R)-pantoate binding. Residues Gly-173 and 181–184 (LSSR) contribute to the ATP site.

This sequence belongs to the pantothenate synthetase family. In terms of assembly, homodimer.

Its subcellular location is the cytoplasm. The catalysed reaction is (R)-pantoate + beta-alanine + ATP = (R)-pantothenate + AMP + diphosphate + H(+). Its pathway is cofactor biosynthesis; (R)-pantothenate biosynthesis; (R)-pantothenate from (R)-pantoate and beta-alanine: step 1/1. Functionally, catalyzes the condensation of pantoate with beta-alanine in an ATP-dependent reaction via a pantoyl-adenylate intermediate. This chain is Pantothenate synthetase, found in Neisseria meningitidis serogroup C / serotype 2a (strain ATCC 700532 / DSM 15464 / FAM18).